The following is a 241-amino-acid chain: Uridylate kinase (241 aa).

15-18 (KLSG) lines the ATP pocket. The segment at 23-28 (GTEGFG) is involved in allosteric activation by GTP. Gly57 serves as a coordination point for UMP. Positions 58 and 62 each coordinate ATP. Residues Asp77 and 138-145 (TGNPFFTT) contribute to the UMP site. ATP-binding residues include Thr165, Phe171, and Asp174.

Belongs to the UMP kinase family. Homohexamer.

Its subcellular location is the cytoplasm. The enzyme catalyses UMP + ATP = UDP + ADP. It participates in pyrimidine metabolism; CTP biosynthesis via de novo pathway; UDP from UMP (UMPK route): step 1/1. Allosterically activated by GTP. Inhibited by UTP. Functionally, catalyzes the reversible phosphorylation of UMP to UDP. This chain is Uridylate kinase, found in Salmonella choleraesuis (strain SC-B67).